The primary structure comprises 454 residues: Neuronal acetylcholine receptor subunit alpha-5 (454 aa).

The interval M1–P26 is disordered. A signal peptide spans M1–V29. A compositionally biased stretch (low complexity) spans P10–G22. Over A30–T240 the chain is Extracellular. N-linked (GlcNAc...) asparagine glycans are attached at residues N55, N169, and N215. Residues C156 and C170 are joined by a disulfide bond. The cysteines at positions 220 and 221 are disulfide-linked. 3 helical membrane passes run L241–P261, L270–P290, and L303–I323. The Cytoplasmic segment spans residues H324–M416. The chain crosses the membrane as a helical span at residues F417 to I437. The Extracellular portion of the chain corresponds to H438–T454.

Belongs to the ligand-gated ion channel (TC 1.A.9) family. Acetylcholine receptor (TC 1.A.9.1) subfamily. Alpha-5/CHRNA5 sub-subfamily. Neuronal AChR that forms heteropentamers composed of two different type of subunits: alpha and non-alpha (beta). CHRNA5/alpha-5 subunit is only able to form functional nAChRs when co-assembled with another alpha subunit, can be combined to CHRNA4/alpha-4 or CHRNA3/alpha-3 and CHRNB4/beta-4 or CHRNB2/beta-2 to give rise to functional receptors. Interacts with LYPD6.

The protein resides in the synaptic cell membrane. The protein localises to the cell membrane. It carries out the reaction Ca(2+)(in) = Ca(2+)(out). The enzyme catalyses K(+)(in) = K(+)(out). It catalyses the reaction Na(+)(in) = Na(+)(out). Its activity is regulated as follows. Activated by a myriad of ligands such as acetylcholine, cytisine, nicotine, choline and epibatidine. Functionally, component of neuronal acetylcholine receptors (nAChRs) that function as pentameric, ligand-gated cation channels with high calcium permeability among other activities. nAChRs are excitatory neurotrasnmitter receptors formed by a collection of nAChR subunits known to mediate synaptic transmission in the nervous system and the neuromuscular junction. Each nAchR subunit confers differential attributes to channel properties, including activation, deactivation and desensitization kinetics, pH sensitivity, cation permeability, and binding to allosteric modulators. Has an accessory rather than functional role and is only able to form functional nAChRs when co-assembled with another beta subunit. Participates in pentameric assemblies along with CHRNA3, CHRNA4, CHRNB2 and CHRNB4. Increases receptor sensitivity to acetylcholine and nicotine when associated with CHRNA4 and CHRNB2. Plays a role in nicotine addiction. The sequence is that of Neuronal acetylcholine receptor subunit alpha-5 (CHRNA5) from Gallus gallus (Chicken).